The sequence spans 425 residues: Serine--tRNA ligase (425 aa).

An L-serine-binding site is contributed by Thr-233–Glu-235. Position 264–266 (Arg-264–Glu-266) interacts with ATP. Glu-287 is an L-serine binding site. Residue Glu-351–Ser-354 participates in ATP binding. Ser-387 is an L-serine binding site.

The protein belongs to the class-II aminoacyl-tRNA synthetase family. Type-1 seryl-tRNA synthetase subfamily. In terms of assembly, homodimer. The tRNA molecule binds across the dimer.

It localises to the cytoplasm. It catalyses the reaction tRNA(Ser) + L-serine + ATP = L-seryl-tRNA(Ser) + AMP + diphosphate + H(+). It carries out the reaction tRNA(Sec) + L-serine + ATP = L-seryl-tRNA(Sec) + AMP + diphosphate + H(+). It functions in the pathway aminoacyl-tRNA biosynthesis; selenocysteinyl-tRNA(Sec) biosynthesis; L-seryl-tRNA(Sec) from L-serine and tRNA(Sec): step 1/1. Functionally, catalyzes the attachment of serine to tRNA(Ser). Is also able to aminoacylate tRNA(Sec) with serine, to form the misacylated tRNA L-seryl-tRNA(Sec), which will be further converted into selenocysteinyl-tRNA(Sec). The sequence is that of Serine--tRNA ligase from Clostridium perfringens (strain ATCC 13124 / DSM 756 / JCM 1290 / NCIMB 6125 / NCTC 8237 / Type A).